The following is a 593-amino-acid chain: MAARQQLALLSVSEKAGLVEFARSLNALGLGLIASGGTATALRDAGLPVRDVSDLTGFPEMLGGRVKTLHPAVHAGILARNIPEDNADMNKQDFSLVRVVVCNLYPFVKTVSSPGVTVPEAVEKIDIGGVALLRAAAKNHARVTVVCDPADYSSVAKEMAASKDKDTSVETRRHLALKAFTHTAQYDAAISDYFRKEYSKGVSQLPLRYGMNPHQSPAQLYTTRPKLPLTVVNGSPGFINLCDALNAWQLVKELKQALGIPAAASFKHVSPAGAAVGIPLSEEEAQVCMVHDLHKTLTPLASAYARSRGADRMSSFGDFIALSDICDVPTAKIISREVSDGVVAPGYEEEALKILSKKKNGGYCVLQMDPNYEPDDNEIRTLYGLQLMQKRNNAVIDRSLFKNIVTKNKTLPESAVRDLIVASIAVKYTQSNSVCYAKDGQVIGIGAGQQSRIHCTRLAGDKANSWWLRHHPRVLSMKFKAGVKRAEVSNAIDQYVTGTIGEDEDLVKWQAMFEEVPAQLTEAEKKQWIAKLTAVSLSSDAFFPFRDNVDRAKRIGVQFIVAPSGSAADEVVIEACNELGITLIHTNLRLFHH.

Residues 1 to 147 form the MGS-like domain; sequence MAARQQLALL…KNHARVTVVC (147 aa). The segment at 1-199 is IMP cyclohydrolase; that stretch reads MAARQQLALL…ISDYFRKEYS (199 aa). IMP contacts are provided by residues 13–15, 35–38, 65–68, 102–103, and 126–127; these read SEK, SGGT, RVKT, CN, and DI. Lys138 acts as the Proton donor/acceptor; for FAICAR cyclization activity in catalysis. N6-acetyllysine is present on Lys200. The segment at 200–593 is AICAR formyltransferase; the sequence is KGVSQLPLRY…IHTNLRLFHH (394 aa). Residues 208-209, His268, Gly317, Asp340, Asn432, and Arg452 each bind 5-amino-1-(5-phospho-beta-D-ribosyl)imidazole-4-carboxamide; that span reads RY. Residue His268 is the Proton acceptor; for AICAR formyltransferase activity of the active site. Ile453 contributes to the (6R)-10-formyltetrahydrofolate binding site. Phe542 lines the 5-amino-1-(5-phospho-beta-D-ribosyl)imidazole-4-carboxamide pocket. Residues Asp547 and 566–567 each bind (6R)-10-formyltetrahydrofolate; that span reads SA. Arg589 provides a ligand contact to 5-amino-1-(5-phospho-beta-D-ribosyl)imidazole-4-carboxamide.

Belongs to the PurH family. Homodimer. Associates with internalized INSR complexes on Golgi/endosomal membranes. Interacts with INSR; ATIC together with PRKAA2/AMPK2 and HACD3/PTPLAD1 is proposed to be part of a signaling network regulating INSR autophosphorylation and endocytosis.

It is found in the cytoplasm. It localises to the cytosol. The catalysed reaction is (6R)-10-formyltetrahydrofolate + 5-amino-1-(5-phospho-beta-D-ribosyl)imidazole-4-carboxamide = 5-formamido-1-(5-phospho-D-ribosyl)imidazole-4-carboxamide + (6S)-5,6,7,8-tetrahydrofolate. It catalyses the reaction 10-formyldihydrofolate + 5-amino-1-(5-phospho-beta-D-ribosyl)imidazole-4-carboxamide = 5-formamido-1-(5-phospho-D-ribosyl)imidazole-4-carboxamide + 7,8-dihydrofolate. It carries out the reaction IMP + H2O = 5-formamido-1-(5-phospho-D-ribosyl)imidazole-4-carboxamide. It functions in the pathway purine metabolism; IMP biosynthesis via de novo pathway; 5-formamido-1-(5-phospho-D-ribosyl)imidazole-4-carboxamide from 5-amino-1-(5-phospho-D-ribosyl)imidazole-4-carboxamide (10-formyl THF route): step 1/1. The protein operates within purine metabolism; IMP biosynthesis via de novo pathway; IMP from 5-formamido-1-(5-phospho-D-ribosyl)imidazole-4-carboxamide: step 1/1. With respect to regulation, AMP and XMP inhibit AICAR formyltransferase activity. AICAR formyltransferase activity is competitively inhibited by 2-[5-hydroxy-3-methyl-1-(2-methyl-4-sulfo-phenyl)-1H-pyrazol-4-ylazo]-4-sulfo-benzoic acid (326203-A). FAICAR cyclization is competitively inhibited by 1,5-dihydroimidazo[4,5-c][1,2,6]thiadiazin-4(3H)-one-2,2-dioxide and the corresponding nucleoside and nucleoside monophosphate. Its function is as follows. Bifunctional enzyme that catalyzes the last two steps of purine biosynthesis. Acts as a transformylase that incorporates a formyl group to the AMP analog AICAR (5-amino-1-(5-phospho-beta-D-ribosyl)imidazole-4-carboxamide) to produce the intermediate formyl-AICAR (FAICAR). Can use both 10-formyldihydrofolate and 10-formyltetrahydrofolate as the formyl donor in this reaction. Also catalyzes the cyclization of FAICAR to inosine monophosphate (IMP). Promotes insulin receptor/INSR autophosphorylation and is involved in INSR internalization. This is Bifunctional purine biosynthesis protein ATIC (ATIC) from Gallus gallus (Chicken).